Here is a 1342-residue protein sequence, read N- to C-terminus: DNA-directed RNA polymerase subunit beta (1342 aa).

This sequence belongs to the RNA polymerase beta chain family. The RNAP catalytic core consists of 2 alpha, 1 beta, 1 beta' and 1 omega subunit. When a sigma factor is associated with the core the holoenzyme is formed, which can initiate transcription.

The enzyme catalyses RNA(n) + a ribonucleoside 5'-triphosphate = RNA(n+1) + diphosphate. In terms of biological role, DNA-dependent RNA polymerase catalyzes the transcription of DNA into RNA using the four ribonucleoside triphosphates as substrates. The chain is DNA-directed RNA polymerase subunit beta from Mannheimia succiniciproducens (strain KCTC 0769BP / MBEL55E).